We begin with the raw amino-acid sequence, 287 residues long: MVEFAFDIKHLFPQSIIRVQAHSLRPKVTQCRRYAQTERGKSTMTSCRLSEILNIMGKLSADAQGLCHAVTSADKLASDQVVYLMADKAAGHWEITGLLKVGTKDLFVFDQGGCYRRLNQTPAILDFYVHESRQRCGQGKLLFEWMLEKQGWSAHKCTVDRPSNKMLAFMAKHYGLVRTIPQGNNFVLYEGFFDDPITTCKSASGLQATGSGCRSRSQGHYVRQEQDQAQIKHGQANRNTVQNDANSGPFRQDQKIVVGTSIYRRRWKSPRTLARAGCREVSGGRRF.

One can recognise an N-acetyltransferase domain in the interval 2–193; sequence VEFAFDIKHL…NNFVLYEGFF (192 aa). Residues 127 to 140 and 163 to 172 contribute to the acetyl-CoA site; these read FYVHESRQRCGQGK and SNKMLAFMAK.

It belongs to the acetyltransferase ATAT1 family.

It localises to the midbody. It is found in the midbody ring. The catalysed reaction is L-lysyl-[alpha-tubulin] + acetyl-CoA = N(6)-acetyl-L-lysyl-[alpha-tubulin] + CoA + H(+). Functionally, specifically acetylates 'Lys-40' in alpha-tubulin on the lumenal side of microtubules. Promotes microtubule destabilization and accelerates microtubule dynamics; this activity may be independent of acetylation activity. Acetylates alpha-tubulin with a slow enzymatic rate, due to a catalytic site that is not optimized for acetyl transfer. Enters the microtubule through each end and diffuses quickly throughout the lumen of microtubules. Acetylates only long/old microtubules because of its slow acetylation rate since it does not have time to act on dynamically unstable microtubules before the enzyme is released. Main acetyltransferase responsible for alpha-tubulin 'Lys-40' acetylation in germline cells during the early stages of oogenesis. Required for normal egg chamber separation. The sequence is that of Alpha-tubulin N-acetyltransferase 2 from Drosophila melanogaster (Fruit fly).